The primary structure comprises 297 residues: Bifunctional protein FolD (297 aa).

NADP(+) contacts are provided by residues 164-166 (GRS), Ser-193, and Val-234.

It belongs to the tetrahydrofolate dehydrogenase/cyclohydrolase family. As to quaternary structure, homodimer.

The enzyme catalyses (6R)-5,10-methylene-5,6,7,8-tetrahydrofolate + NADP(+) = (6R)-5,10-methenyltetrahydrofolate + NADPH. It catalyses the reaction (6R)-5,10-methenyltetrahydrofolate + H2O = (6R)-10-formyltetrahydrofolate + H(+). It participates in one-carbon metabolism; tetrahydrofolate interconversion. Its function is as follows. Catalyzes the oxidation of 5,10-methylenetetrahydrofolate to 5,10-methenyltetrahydrofolate and then the hydrolysis of 5,10-methenyltetrahydrofolate to 10-formyltetrahydrofolate. The polypeptide is Bifunctional protein FolD (Natronomonas pharaonis (strain ATCC 35678 / DSM 2160 / CIP 103997 / JCM 8858 / NBRC 14720 / NCIMB 2260 / Gabara) (Halobacterium pharaonis)).